Reading from the N-terminus, the 83-residue chain is Kappa-ctenitoxin-Pn1a (83 aa).

Residues 1-21 (MWFKIQVLVLAITLITLGIQA) form the signal peptide. The propeptide occupies 22-37 (EPNSSPNNPLIVEEDR). 4 disulfides stabilise this stretch: Cys-40–Cys-55, Cys-47–Cys-60, Cys-54–Cys-71, and Cys-62–Cys-69. Residues 78–83 (LFGFGK) constitute a propeptide that is removed on maturation.

It belongs to the neurotoxin 02 (plectoxin) family. In terms of tissue distribution, expressed by the venom gland.

It is found in the secreted. Its function is as follows. Antagonist of L-type calcium channels (Cav1/CACNA1). In GH3 neuroendocrinal cell line, it reversibly inhibits the A-type potassium current but does not block other potassium currents or calcium channels. Shows an important acetylcholine-mediated antiarrhythmogenic effect in isolated hearts. In vivo, causes paralysis in the posterior limbs and gradual decreases in movement and aggression during 24 hours at dose levels of 5 ug per mouse. The protein is Kappa-ctenitoxin-Pn1a of Phoneutria nigriventer (Brazilian armed spider).